The chain runs to 66 residues: Large ribosomal subunit protein bL35 (66 aa).

The disordered stretch occupies residues K21–S40. The segment covering A28–S40 has biased composition (basic residues).

This sequence belongs to the bacterial ribosomal protein bL35 family.

The sequence is that of Large ribosomal subunit protein bL35 from Ehrlichia canis (strain Jake).